The sequence spans 281 residues: Acetyl-coenzyme A carboxylase carboxyl transferase subunit beta 2 (281 aa).

A CoA carboxyltransferase N-terminal domain is found at 26–281; that stretch reads LLTRCPVCHE…TITQGGHQDV (256 aa). Residues Cys30, Cys33, Cys48, and Cys51 each contribute to the Zn(2+) site. The segment at 30–51 adopts a C4-type zinc-finger fold; the sequence is CPVCHEDCYTQDLGEFKVCPHC.

This sequence belongs to the AccD/PCCB family. In terms of assembly, acetyl-CoA carboxylase is a heterohexamer composed of biotin carboxyl carrier protein (AccB), biotin carboxylase (AccC) and two subunits each of ACCase subunit alpha (AccA) and ACCase subunit beta (AccD). Requires Zn(2+) as cofactor.

It localises to the cytoplasm. It catalyses the reaction N(6)-carboxybiotinyl-L-lysyl-[protein] + acetyl-CoA = N(6)-biotinyl-L-lysyl-[protein] + malonyl-CoA. It participates in lipid metabolism; malonyl-CoA biosynthesis; malonyl-CoA from acetyl-CoA: step 1/1. Component of the acetyl coenzyme A carboxylase (ACC) complex. Biotin carboxylase (BC) catalyzes the carboxylation of biotin on its carrier protein (BCCP) and then the CO(2) group is transferred by the transcarboxylase to acetyl-CoA to form malonyl-CoA. In Lactiplantibacillus plantarum (strain JDM1) (Lactobacillus plantarum), this protein is Acetyl-coenzyme A carboxylase carboxyl transferase subunit beta 2.